Here is a 228-residue protein sequence, read N- to C-terminus: L-ribulose-5-phosphate 4-epimerase UlaF (228 aa).

Residues 26–27 (GN), 43–44 (SG), and 72–73 (SS) contribute to the substrate site. Zn(2+)-binding residues include Asp74, His93, and His95. The active-site Proton donor/acceptor is Asp118. A Zn(2+)-binding site is contributed by His167. The active-site Proton donor/acceptor is the Tyr225.

The protein belongs to the aldolase class II family. AraD/FucA subfamily. Zn(2+) serves as cofactor.

The catalysed reaction is L-ribulose 5-phosphate = D-xylulose 5-phosphate. The protein operates within cofactor degradation; L-ascorbate degradation; D-xylulose 5-phosphate from L-ascorbate: step 4/4. Its function is as follows. Catalyzes the isomerization of L-ribulose 5-phosphate to D-xylulose 5-phosphate. Is involved in the anaerobic L-ascorbate utilization. In Escherichia coli (strain SE11), this protein is L-ribulose-5-phosphate 4-epimerase UlaF.